The sequence spans 396 residues: Stearoyl-[acyl-carrier-protein] 9-desaturase 5, chloroplastic (396 aa).

Residues 1–29 (MAMAMDRIVFSPSSYVYRPCQARGSRSSR) constitute a chloroplast transit peptide. Fe cation contacts are provided by Glu137, Glu175, His178, Glu228, Glu261, and His264.

Belongs to the fatty acid desaturase type 2 family. In terms of assembly, homodimer. It depends on Fe(2+) as a cofactor. In terms of tissue distribution, ubiquitously expressed with a preference in leaves, flowers and stems.

The protein resides in the plastid. It is found in the chloroplast stroma. The enzyme catalyses octadecanoyl-[ACP] + 2 reduced [2Fe-2S]-[ferredoxin] + O2 + 2 H(+) = (9Z)-octadecenoyl-[ACP] + 2 oxidized [2Fe-2S]-[ferredoxin] + 2 H2O. It functions in the pathway lipid metabolism; fatty acid metabolism. Converts stearoyl-ACP to oleoyl-ACP by introduction of a cis double bond between carbons 9 and 10 of the acyl chain. The chain is Stearoyl-[acyl-carrier-protein] 9-desaturase 5, chloroplastic (S-ACP-DES5) from Arabidopsis thaliana (Mouse-ear cress).